Here is a 759-residue protein sequence, read N- to C-terminus: Na(+)/H(+) exchanger beta (759 aa).

The Cytoplasmic portion of the chain corresponds to 1–14; the sequence is MPAFSCAFPGCRRD. The chain crosses the membrane as a helical span at residues 15 to 34; that stretch reads LLVIVLVVFVGIGLPIEASA. The Extracellular segment spans residues 35–75; the sequence is PAYQSHGTEGSHLTNITNTKKAFPVLAVNYEHVRKPFEIAL. Residue Asn49 is glycosylated (N-linked (GlcNAc...) asparagine). A helical membrane pass occupies residues 76–95; the sequence is WILLALLMKLGFHLIPRLSA. Topologically, residues 96-97 are cytoplasmic; sequence VV. A helical membrane pass occupies residues 98-117; sequence PESCLLIVVGLLVGGLIKVI. Topologically, residues 118–122 are extracellular; the sequence is GEEPP. The helical transmembrane segment at 123–142 threads the bilayer; the sequence is VLDSQLFFLCLLPPIILDAG. Residues 143–149 lie on the Cytoplasmic side of the membrane; sequence YFLPIRP. A helical membrane pass occupies residues 150–169; the sequence is FTENVGTILVFAVIGTLWNA. Topologically, residues 170–195 are extracellular; it reads FFMGGLLYALCQIESVGLSGVDLLAC. The helical transmembrane segment at 196 to 214 threads the bilayer; that stretch reads LLFGSIVSAVDPVAVLAVF. The Cytoplasmic portion of the chain corresponds to 215 to 225; the sequence is EEIHINELVHI. The helical transmembrane segment at 226–244 threads the bilayer; that stretch reads LVFGESLLNDAVTVVLYNL. At 245 to 261 the chain is on the extracellular side; it reads FEEFSKVGTVTVLDVFL. Residues 262–282 form a helical membrane-spanning segment; that stretch reads GVVCFFVVSLGGVLVGAIYGF. Topologically, residues 283-311 are cytoplasmic; it reads LAAFTSRFTSHTRVIEPLFVFLYSYMAYL. Residues 312-330 form a helical membrane-spanning segment; sequence SSEMFHLSGIMALIACGVV. Over 331 to 352 the chain is Extracellular; the sequence is MRPYVEANISHKSYTTIKYFLK. N-linked (GlcNAc...) asparagine glycosylation occurs at Asn338. Residues 353 to 372 form a helical membrane-spanning segment; it reads MWSSVSETLIFIFLGVSTVA. Over 373 to 376 the chain is Cytoplasmic; the sequence is GPHA. The chain crosses the membrane as a helical span at residues 377–398; sequence WNWTFVITTVILCLVSRVLGVI. The Extracellular segment spans residues 399 to 446; sequence GLTFIINKFRIVKLTKKDQFIVAYGGLRGAIAFSLGYLLSNSHQMRNL. A helical transmembrane segment spans residues 447–467; the sequence is FLTAIITVIFFTVFVQGMTIR. The Cytoplasmic portion of the chain corresponds to 468 to 759; the sequence is PLVELLAVKK…KEDDDPFMSC (292 aa). Phosphoserine; by PKA occurs at positions 641 and 648. Positions 681 to 759 are disordered; sequence FPTVHFEQPS…KEDDDPFMSC (79 aa). The span at 707–719 shows a compositional bias: basic and acidic residues; that stretch reads VPKRPSLKADIEG.

The protein belongs to the monovalent cation:proton antiporter 1 (CPA1) transporter (TC 2.A.36) family. Activated by cAMP, protein kinase A and protein kinase C.

The protein localises to the basolateral cell membrane. Involved in pH regulation to eliminate acids generated by active metabolism or to counter adverse environmental conditions. Major proton extruding system driven by the inward sodium ion chemical gradient. The sequence is that of Na(+)/H(+) exchanger beta from Oncorhynchus mykiss (Rainbow trout).